Here is a 348-residue protein sequence, read N- to C-terminus: tRNA N6-adenosine threonylcarbamoyltransferase (348 aa).

Fe cation is bound by residues His116 and His120. Substrate contacts are provided by residues 138–142 (IISGG), Asp171, Gly184, and Asn282. Residue Asp310 participates in Fe cation binding.

It belongs to the KAE1 / TsaD family. Requires Fe(2+) as cofactor.

Its subcellular location is the cytoplasm. The catalysed reaction is L-threonylcarbamoyladenylate + adenosine(37) in tRNA = N(6)-L-threonylcarbamoyladenosine(37) in tRNA + AMP + H(+). In terms of biological role, required for the formation of a threonylcarbamoyl group on adenosine at position 37 (t(6)A37) in tRNAs that read codons beginning with adenine. Is involved in the transfer of the threonylcarbamoyl moiety of threonylcarbamoyl-AMP (TC-AMP) to the N6 group of A37, together with TsaE and TsaB. TsaD likely plays a direct catalytic role in this reaction. This Ehrlichia ruminantium (strain Gardel) protein is tRNA N6-adenosine threonylcarbamoyltransferase.